The following is a 434-amino-acid chain: MLRIVSHLAEAQAELERICDRTHDDAVVHREASVREIVQAVQRRGDAALIEFTQEFDGFALQAENLRVSGAELDAAYQQIPKELLDAIRLAHHQIEAFHRQRVPKSWVQFGADGEVLGKRYTPVDRAGLYVPGGRAAYPSTVLMNAVPAKVAGVERVVITTPPGPDGSLNPAVLVAAQEAGIEEIYRVGGAQAIAALAYGTATIPKVDVISGPGNIYVTLAKKLVYGTVGIDSLAGPSEVLIIADRSANPRWVAADLLAQAEHDPLAAAILITPDLELATQVGFEVERQLQDHPRRLVTEKAIAHYGLAIVVDSLETAVKLSNQFAPEHLELEVEDPWALVEQVRHAGAIFLGSLTPEAIGDYVAGPNHTLPTSGAARYASALSVETFLKSSSLIEYTAASLQRVARAVDVLATAEGLESHAESVRLRQQSLDR.

NAD(+)-binding residues include Y130, Q192, and N215. Residues S238, Q260, and H263 each contribute to the substrate site. Zn(2+) is bound by residues Q260 and H263. Active-site proton acceptor residues include E328 and H329. Residues H329, D362, E416, and H421 each coordinate substrate. A Zn(2+)-binding site is contributed by D362. Zn(2+) is bound at residue H421.

Belongs to the histidinol dehydrogenase family. Requires Zn(2+) as cofactor.

The catalysed reaction is L-histidinol + 2 NAD(+) + H2O = L-histidine + 2 NADH + 3 H(+). The protein operates within amino-acid biosynthesis; L-histidine biosynthesis; L-histidine from 5-phospho-alpha-D-ribose 1-diphosphate: step 9/9. In terms of biological role, catalyzes the sequential NAD-dependent oxidations of L-histidinol to L-histidinaldehyde and then to L-histidine. This Synechococcus sp. (strain ATCC 27144 / PCC 6301 / SAUG 1402/1) (Anacystis nidulans) protein is Histidinol dehydrogenase.